The following is a 213-amino-acid chain: Ribosomal RNA large subunit methyltransferase E (213 aa).

Residues glycine 60, tryptophan 62, aspartate 80, aspartate 96, and aspartate 121 each coordinate S-adenosyl-L-methionine. Lysine 161 (proton acceptor) is an active-site residue.

The protein belongs to the class I-like SAM-binding methyltransferase superfamily. RNA methyltransferase RlmE family.

It is found in the cytoplasm. It catalyses the reaction uridine(2552) in 23S rRNA + S-adenosyl-L-methionine = 2'-O-methyluridine(2552) in 23S rRNA + S-adenosyl-L-homocysteine + H(+). In terms of biological role, specifically methylates the uridine in position 2552 of 23S rRNA at the 2'-O position of the ribose in the fully assembled 50S ribosomal subunit. The polypeptide is Ribosomal RNA large subunit methyltransferase E (Xylella fastidiosa (strain 9a5c)).